The primary structure comprises 718 residues: Adhesin-like cell surface protein MAD1 (718 aa).

The signal sequence occupies residues 1 to 19 (MKGAIQFLGALAAVQAVSA). A run of 9 repeats spans residues 217–243 (PCTE…TEPA), 244–265 (PCTE…TEPA), 266–282 (PCTE…TEPA), 283–309 (PCTE…TEPA), 310–336 (PCTE…TEPA), 337–358 (PCTE…TEPA), 359–382 (PCTE…TDEA), 383–402 (PCTD…TDEA), and 403–420 (PCTE…AVPT). The disordered stretch occupies residues 452–472 (TSIPYETPSPSETETLPPSGT). Residues 462–575 (SETETLPPSG…VTLPPVTTGA (114 aa)) enclose the CFEM domain. Intrachain disulfides connect Cys494/Cys526, Cys504/Cys512, and Cys514/Cys548. Asp509 is a heme binding site. The GPI-anchor amidated glycine moiety is linked to residue Gly693. A propeptide spans 694-718 (AASSFKAFSTVMLAGVIGLTALIMA) (removed in mature form).

It belongs to the RBT5 family. Post-translationally, the GPI-anchor is attached to the protein in the endoplasmic reticulum and serves to target the protein to the cell surface. There, the glucosamine-inositol phospholipid moiety is cleaved off and the GPI-modified mannoprotein is covalently attached via its lipidless GPI glycan remnant to the 1,6-beta-glucan of the outer cell wall layer.

The protein localises to the secreted. The protein resides in the cell wall. It is found in the cell membrane. Cell surface adhesion protein that plays a key role in switching between the saprophytic lifestyle and the predacious lifestyle (nematode trapping). Likely functions to prevent energy-consuming trap formation in the absence of nematodes, and keeps the fungus in the saprophytic life style. May influence the induction signal of trap formation by limiting the porosity of the cell wall and thus affecting its permeability of nitrogen source. The protein is Adhesin-like cell surface protein MAD1 of Arthrobotrys oligospora (strain ATCC 24927 / CBS 115.81 / DSM 1491) (Nematode-trapping fungus).